The sequence spans 378 residues: Probable cytochrome oxidase subunit 2 (378 aa).

Residues 1–8 lie on the Cytoplasmic side of the membrane; sequence MIDYEFLR. Residues 9–28 form a helical membrane-spanning segment; sequence FIWWVLVIVLLIGFSVTDGF. The Periplasmic segment spans residues 29–79; sequence DMGVTALLPVIGKKEVERRIMINTIAPHWDGNQVWLLTAGGAIFAAWPIVY. Residues 80-99 traverse the membrane as a helical segment; that stretch reads AVSFSGFYIALVLVLAALFL. The Cytoplasmic portion of the chain corresponds to 100-122; it reads RPLGFEYRAKIDNPTWRSVWDWG. A helical membrane pass occupies residues 123-142; the sequence is LFAGGFVPALVFGVAFGNLL. At 143-164 the chain is on the periplasmic side; it reads QGVPFHFNELTQVTYTGSFFEL. A helical membrane pass occupies residues 165-184; it reads LNPFALLCGVISLSMLVTHG. Residues 185-205 lie on the Cytoplasmic side of the membrane; sequence ANWLQMKTTEALRDRARTVSQ. Residues 206–224 form a helical membrane-spanning segment; the sequence is IGSIVTLIAFVLAGVWLYS. The Periplasmic segment spans residues 225 to 261; sequence KDGYVVTSTIDHFAPSSPMNKEVAVETGAWFRNFNEM. A helical membrane pass occupies residues 262-281; sequence PILWIFPALAVVAALLNAAF. Topologically, residues 282-291 are cytoplasmic; it reads SKANRCGFAF. Residues 292–311 traverse the membrane as a helical segment; it reads FFSALTMAGVIITAAVSMFP. Over 312 to 335 the chain is Periplasmic; it reads FVMPSSSHPEQSLLMWDSTSSELT. Residues 336–355 form a helical membrane-spanning segment; sequence LTLMLIFAVVFVVIALAYTI. The Cytoplasmic segment spans residues 356–378; it reads WSYSKMFGRLDANFIDKNKHSLY.

Belongs to the cytochrome ubiquinol oxidase subunit 2 family. Heterodimer of subunits I and II.

Its subcellular location is the cell inner membrane. Probable cytochrome oxidase subunit. This Haemophilus influenzae (strain ATCC 51907 / DSM 11121 / KW20 / Rd) protein is Probable cytochrome oxidase subunit 2.